A 516-amino-acid polypeptide reads, in one-letter code: 2-isopropylmalate synthase (516 aa).

In terms of domain architecture, Pyruvate carboxyltransferase spans 5 to 267 (IIIFDTTLRD…STDINIKEIH (263 aa)). Residues Asp14, His202, His204, and Asn238 each contribute to the Mn(2+) site. The tract at residues 393 to 516 (KLEYFDVQSK…VNKELERLQK (124 aa)) is regulatory domain.

This sequence belongs to the alpha-IPM synthase/homocitrate synthase family. LeuA type 1 subfamily. As to quaternary structure, homodimer. The cofactor is Mn(2+).

The protein resides in the cytoplasm. It carries out the reaction 3-methyl-2-oxobutanoate + acetyl-CoA + H2O = (2S)-2-isopropylmalate + CoA + H(+). Its pathway is amino-acid biosynthesis; L-leucine biosynthesis; L-leucine from 3-methyl-2-oxobutanoate: step 1/4. In terms of biological role, catalyzes the condensation of the acetyl group of acetyl-CoA with 3-methyl-2-oxobutanoate (2-ketoisovalerate) to form 3-carboxy-3-hydroxy-4-methylpentanoate (2-isopropylmalate). The chain is 2-isopropylmalate synthase from Buchnera aphidicola subsp. Cinara cedri (strain Cc).